A 184-amino-acid chain; its full sequence is Ribosome-recycling factor (184 aa).

This sequence belongs to the RRF family.

It localises to the cytoplasm. Its function is as follows. Responsible for the release of ribosomes from messenger RNA at the termination of protein biosynthesis. May increase the efficiency of translation by recycling ribosomes from one round of translation to another. The protein is Ribosome-recycling factor of Aquifex aeolicus (strain VF5).